The primary structure comprises 830 residues: Vacuolar protein sorting-associated protein 11 homolog (830 aa).

The segment at 733–775 adopts an RING-type; atypical zinc-finger fold; sequence CDICREMLSMQSIYFLCQHSFHEECLNYKSTKRQEKFLCIICK.

It belongs to the VPS11 family. Part of the homotypic fusion and vacuole protein sorting (HOPS) complex, composed of Vps16A, car/Vps33A, dor/Vps18, Vps39, Vps11 and lt/Vps41. Unlike in other species, not part of the class C core vacuole/endosome tethering (CORVET) complex.

Its subcellular location is the late endosome membrane. The protein localises to the lysosome membrane. Its function is as follows. Part of the homotypic fusion and vacuole protein sorting (HOPS) tethering complex involved in endo-lysosomal vesicle trafficking and lysosome biogenesis, but unlike in many other species does not form part of the class C core vacuole/endosome tethering (CORVET) complex. The HOPS complex facilitates docking and fusion of lysosomes with late endosomes and several other types of vesicles. The HOPS complex is also involved in autophagy, pigment granule biogenesis and crinophagy (the elimination of unused secretory granules through fusion with lysosomes). The HOPS complex probably instigates autophagosome-lysosome fusion by binding autophagosome-associated Syx17/syntaxin 17 and promoting assembly of the trans-SNARE complex. Independent of Syx17/syntaxin 17, HOPS is involved in biosynthetic transport to lysosomes and lysosome-related organelles such as eye-pigment granules. Required for autophagocytosis-dependent remodeling of myofibrils and transverse-tubules (T-tubules) during metamorphosis. The polypeptide is Vacuolar protein sorting-associated protein 11 homolog (Drosophila melanogaster (Fruit fly)).